A 594-amino-acid chain; its full sequence is UvrABC system protein C (594 aa).

Positions 14 to 91 constitute a GIY-YIG domain; sequence DQPGCYLMKD…IKKYDPKYNI (78 aa). Residues 196 to 231 form the UVR domain; sequence KEIRSELETKMYEASEKLEFERAKELRDQIAHIDAI.

It belongs to the UvrC family. Interacts with UvrB in an incision complex.

It localises to the cytoplasm. In terms of biological role, the UvrABC repair system catalyzes the recognition and processing of DNA lesions. UvrC both incises the 5' and 3' sides of the lesion. The N-terminal half is responsible for the 3' incision and the C-terminal half is responsible for the 5' incision. The sequence is that of UvrABC system protein C from Bacillus mycoides (strain KBAB4) (Bacillus weihenstephanensis).